Reading from the N-terminus, the 524-residue chain is Casein kinase I homolog 3 (524 aa).

Positions 14–319 (YAVGPKIGEG…YLISLMDDAL (306 aa)) constitute a Protein kinase domain. ATP is bound by residues 20–28 (IGEGSFGVI) and Lys60. Asp150 functions as the Proton acceptor in the catalytic mechanism. Disordered regions lie at residues 352–414 (HGYG…KQQH) and 427–474 (PETH…EHNL). Low complexity predominate over residues 360–373 (RVNGNTARNNVNTN). Composition is skewed to polar residues over residues 374–413 (SKTR…TKQQ) and 429–474 (THSN…EHNL). A YXXZ targeting signal motif is present at residues 444-447 (YDSI). S-palmitoyl cysteine attachment occurs at residues Cys517, Cys518, Cys519, Cys520, Cys522, Cys523, and Cys524.

Belongs to the protein kinase superfamily. CK1 Ser/Thr protein kinase family. Casein kinase I subfamily.

Its subcellular location is the cell membrane. It is found in the nucleus membrane. It localises to the vacuole membrane. The catalysed reaction is L-seryl-[protein] + ATP = O-phospho-L-seryl-[protein] + ADP + H(+). The enzyme catalyses L-threonyl-[protein] + ATP = O-phospho-L-threonyl-[protein] + ADP + H(+). Casein kinases are operationally defined by their preferential utilization of acidic proteins such as caseins as substrates. Phosphorylates MON1, inhibiting the guanine nucleotide exchange factor activity of the MON1-CCZ1 complex, possibly by preventing its recruitment to membranes by small GTPase RAB5 homologs. This Saccharomyces cerevisiae (strain ATCC 204508 / S288c) (Baker's yeast) protein is Casein kinase I homolog 3 (YCK3).